A 142-amino-acid polypeptide reads, in one-letter code: Large ribosomal subunit protein uL13 (142 aa).

It belongs to the universal ribosomal protein uL13 family. Part of the 50S ribosomal subunit.

Functionally, this protein is one of the early assembly proteins of the 50S ribosomal subunit, although it is not seen to bind rRNA by itself. It is important during the early stages of 50S assembly. In Baumannia cicadellinicola subsp. Homalodisca coagulata, this protein is Large ribosomal subunit protein uL13.